The following is a 334-amino-acid chain: Beta-ketoacyl-[acyl-carrier-protein] synthase III (334 aa).

Active-site residues include Cys114 and His253. Residues 254-258 (QANIR) form an ACP-binding region. Asn283 is a catalytic residue.

The protein belongs to the thiolase-like superfamily. FabH family. Homodimer.

The protein localises to the cytoplasm. The enzyme catalyses malonyl-[ACP] + acetyl-CoA + H(+) = 3-oxobutanoyl-[ACP] + CO2 + CoA. It participates in lipid metabolism; fatty acid biosynthesis. Functionally, catalyzes the condensation reaction of fatty acid synthesis by the addition to an acyl acceptor of two carbons from malonyl-ACP. Catalyzes the first condensation reaction which initiates fatty acid synthesis and may therefore play a role in governing the total rate of fatty acid production. Possesses both acetoacetyl-ACP synthase and acetyl transacylase activities. Its substrate specificity determines the biosynthesis of branched-chain and/or straight-chain of fatty acids. This chain is Beta-ketoacyl-[acyl-carrier-protein] synthase III, found in Campylobacter concisus (strain 13826).